The primary structure comprises 221 residues: Leucine rich adaptor protein 1-like (221 aa).

Residue Met-1 is modified to N-acetylmethionine. The segment at 1 to 81 (MEDGPLPDLR…SGSPRRSHPS (81 aa)) is disordered. 2 stretches are compositionally biased toward basic and acidic residues: residues 8–21 (DLRD…RKVP) and 28–39 (LRGEEPAPREGA). Positions 48-75 (SCSSSSSCSSFAPSVSSSSSSSPASGSP) are enriched in low complexity.

This chain is Leucine rich adaptor protein 1-like (Lurap1l), found in Rattus norvegicus (Rat).